The following is a 740-amino-acid chain: NAD(P)H-quinone oxidoreductase subunit 5, chloroplastic (740 aa).

Helical transmembrane passes span 9-29, 40-60, 89-109, 125-145, 147-167, 185-205, 221-241, 258-278, 283-303, 327-347, 354-374, 396-416, 425-445, 547-567, 606-626, and 718-738; these read WIIP…LLLF, WSFL…YLSI, IDPL…LVLI, FAYM…SNLI, IYFF…FWFT, GDFG…SFEF, VNLL…IAKS, TPIS…FLVA, LFIV…ITIL, LGYM…FHLI, ALLF…VGYS, TAFL…CFWS, LLFS…TAFY, ILFP…IGIP, FSVS…KPFY, and ISSY…FLKI.

It belongs to the complex I subunit 5 family. As to quaternary structure, NDH is composed of at least 16 different subunits, 5 of which are encoded in the nucleus.

The protein resides in the plastid. It is found in the chloroplast thylakoid membrane. The catalysed reaction is a plastoquinone + NADH + (n+1) H(+)(in) = a plastoquinol + NAD(+) + n H(+)(out). The enzyme catalyses a plastoquinone + NADPH + (n+1) H(+)(in) = a plastoquinol + NADP(+) + n H(+)(out). Functionally, NDH shuttles electrons from NAD(P)H:plastoquinone, via FMN and iron-sulfur (Fe-S) centers, to quinones in the photosynthetic chain and possibly in a chloroplast respiratory chain. The immediate electron acceptor for the enzyme in this species is believed to be plastoquinone. Couples the redox reaction to proton translocation, and thus conserves the redox energy in a proton gradient. The protein is NAD(P)H-quinone oxidoreductase subunit 5, chloroplastic (ndhF) of Aethionema cordifolium (Lebanon stonecress).